We begin with the raw amino-acid sequence, 175 residues long: NADH-ubiquinone oxidoreductase chain 6 (175 aa).

5 consecutive transmembrane segments (helical) span residues 1 to 21, 25 to 45, 47 to 67, 88 to 108, and 149 to 169; these read MMIYIGFILSIVFVISFVGFS, SPIYGGLVLIVSGGVGCGIVM, FGGSFLGLMVFLIYLGGMLVV, TVLSTFILGVLMEAMLVLYMF, and YGVWIIIVTGWSLFVGVLVVL.

Belongs to the complex I subunit 6 family. Core subunit of respiratory chain NADH dehydrogenase (Complex I) which is composed of 45 different subunits.

Its subcellular location is the mitochondrion inner membrane. The enzyme catalyses a ubiquinone + NADH + 5 H(+)(in) = a ubiquinol + NAD(+) + 4 H(+)(out). Its function is as follows. Core subunit of the mitochondrial membrane respiratory chain NADH dehydrogenase (Complex I) which catalyzes electron transfer from NADH through the respiratory chain, using ubiquinone as an electron acceptor. Essential for the catalytic activity and assembly of complex I. This is NADH-ubiquinone oxidoreductase chain 6 (MT-ND6) from Rhinoceros unicornis (Greater Indian rhinoceros).